We begin with the raw amino-acid sequence, 126 residues long: Small ribosomal subunit protein uS13 (126 aa).

A disordered region spans residues 98 to 126 (PVRGQSTKNNARTRKGRKKTVANKKKATK). The segment covering 108–126 (ARTRKGRKKTVANKKKATK) has biased composition (basic residues).

The protein belongs to the universal ribosomal protein uS13 family. In terms of assembly, part of the 30S ribosomal subunit. Forms a loose heterodimer with protein S19. Forms two bridges to the 50S subunit in the 70S ribosome.

Located at the top of the head of the 30S subunit, it contacts several helices of the 16S rRNA. In the 70S ribosome it contacts the 23S rRNA (bridge B1a) and protein L5 of the 50S subunit (bridge B1b), connecting the 2 subunits; these bridges are implicated in subunit movement. Contacts the tRNAs in the A and P-sites. This Bacteroides fragilis (strain ATCC 25285 / DSM 2151 / CCUG 4856 / JCM 11019 / LMG 10263 / NCTC 9343 / Onslow / VPI 2553 / EN-2) protein is Small ribosomal subunit protein uS13.